A 418-amino-acid chain; its full sequence is MNKTHLTQTKFADLPLEKSLISGLTSQGYEYCTPIQALSLPITLTGKDIAGQAQTGTGKTLAFLPAVFHHLLTNAQPENRRKNQPRAIILAPTRELAIQIHKDAMVLASMSNLRLGLAYGGEKVEIQRTKLEKGVDILIGTTGRTIDFVKQGVIDMGSIQSVVLDEADRMFDLGFIKDIRYLFRRMPEAKSRLNMLFSATLSHKVQELAFEHMNDPESIQIEPEVMTSVNITEELFYPSNQDKILLLLSLIEEDWPDKAIVFANTKHTCEKVWGYLAGDGLRTGLLTGDVPQNKRLKILQQFTDGEIDILVATDVAARGLHIPKVSHVFNFDLPDDCEDYVHRIGRTGRAGEKGLAISFACEKYVFNLPAIEEYIKHPIPCSEYDKNAMLDSLPVMKVTKYKAHPNSRKDNYHRTHKR.

The short motif at 9-37 (TKFADLPLEKSLISGLTSQGYEYCTPIQA) is the Q motif element. Positions 40–219 (LPITLTGKDI…FEHMNDPESI (180 aa)) constitute a Helicase ATP-binding domain. 53-60 (AQTGTGKT) serves as a coordination point for ATP. A DEAD box motif is present at residues 165–168 (DEAD). The 148-residue stretch at 243–390 (KILLLLSLIE…CSEYDKNAML (148 aa)) folds into the Helicase C-terminal domain.

Belongs to the DEAD box helicase family. RhlB subfamily. Component of the RNA degradosome, which is a multiprotein complex involved in RNA processing and mRNA degradation.

It is found in the cytoplasm. It catalyses the reaction ATP + H2O = ADP + phosphate + H(+). DEAD-box RNA helicase involved in RNA degradation. Has RNA-dependent ATPase activity and unwinds double-stranded RNA. The polypeptide is ATP-dependent RNA helicase RhlB (Psychromonas ingrahamii (strain DSM 17664 / CCUG 51855 / 37)).